Reading from the N-terminus, the 569-residue chain is CUE domain-containing protein 5 (569 aa).

One can recognise a CUE domain in the interval 17–60 (MAEKARATLKEAFPNTDDAIIRAVLAASGYKLEPAFNALLGLSD). 3 disordered regions span residues 67–139 (MEQA…DDYS), 175–275 (DGEE…SSSA), and 311–569 (EELE…GKET). The span at 79–100 (AAHDDPVQRQLEEDERCARELA) shows a compositional bias: basic and acidic residues. Basic residues predominate over residues 104–113 (NSHRPERRRK). Basic and acidic residues predominate over residues 234-249 (SDPHMLNEKDFERLRL). Positions 250–274 (ESSSSPMMRRSSLNSNRRSVESSSS) are enriched in low complexity. The segment covering 329–340 (VVVEKKPDESRK) has biased composition (basic and acidic residues). The segment covering 347–364 (ETVSEEQMGSSNAKSKVL) has biased composition (polar residues). Basic and acidic residues-rich tracts occupy residues 367 to 381 (EPKD…KTET), 399 to 500 (ISEK…KETD), and 507 to 558 (KEEK…KIEE).

Its subcellular location is the cytoplasm. This Schizosaccharomyces pombe (strain 972 / ATCC 24843) (Fission yeast) protein is CUE domain-containing protein 5.